A 322-amino-acid polypeptide reads, in one-letter code: Transcriptional activator protein Pur-alpha (322 aa).

A disordered region spans residues 1–55 (MADRDSGSEQGGAALGSGGSLGHPGSGSGSGGGGGGGGGGGGSGGGGGGAPGGLQ). Alanine 2 is modified (N-acetylalanine). Over residues 9-52 (EQGGAALGSGGSLGHPGSGSGSGGGGGGGGGGGGSGGGGGGAPG) the composition is skewed to gly residues. One copy of the PUR repeat I repeat lies at 60-125 (ELASKRVDIQ…DFIEHYAQLG (66 aa)). The PUR repeat II repeat unit spans residues 142 to 213 (ALKSEFLVRE…KLIDDYGVEE (72 aa)). Serine 182 carries the phosphoserine modification. The PUR repeat III repeat unit spans residues 215 to 281 (PAELPEGTSL…CKYSEEMKKI (67 aa)). Over residues 295 to 314 (LHQQQQQQQEETAAATLLLQ) the composition is skewed to low complexity. A disordered region spans residues 295-322 (LHQQQQQQQEETAAATLLLQGEEEGEED).

It belongs to the PUR DNA-binding protein family. As to quaternary structure, homodimer, heterodimer with PURB and heterotrimer with PURB and YBX1/Y-box protein 1. Interacts with FMR1; this interaction occurs in association with polyribosome.

It is found in the nucleus. In terms of biological role, this is a probable transcription activator that specifically binds the purine-rich single strand of the PUR element located upstream of the MYC gene. May play a role in the initiation of DNA replication and in recombination. The sequence is that of Transcriptional activator protein Pur-alpha (PURA) from Homo sapiens (Human).